A 668-amino-acid chain; its full sequence is DNA ligase (668 aa).

NAD(+)-binding positions include 32-36 (DAEYD), 81-82 (SL), and E113. Catalysis depends on K115, which acts as the N6-AMP-lysine intermediate. Positions 136, 173, 289, and 313 each coordinate NAD(+). C407, C410, C425, and C431 together coordinate Zn(2+). The 79-residue stretch at 590 to 668 (ASEQPFAGKT…EEELQQALQG (79 aa)) folds into the BRCT domain.

This sequence belongs to the NAD-dependent DNA ligase family. LigA subfamily. Mg(2+) serves as cofactor. Requires Mn(2+) as cofactor.

The catalysed reaction is NAD(+) + (deoxyribonucleotide)n-3'-hydroxyl + 5'-phospho-(deoxyribonucleotide)m = (deoxyribonucleotide)n+m + AMP + beta-nicotinamide D-nucleotide.. DNA ligase that catalyzes the formation of phosphodiester linkages between 5'-phosphoryl and 3'-hydroxyl groups in double-stranded DNA using NAD as a coenzyme and as the energy source for the reaction. It is essential for DNA replication and repair of damaged DNA. In Aeromonas hydrophila subsp. hydrophila (strain ATCC 7966 / DSM 30187 / BCRC 13018 / CCUG 14551 / JCM 1027 / KCTC 2358 / NCIMB 9240 / NCTC 8049), this protein is DNA ligase.